Reading from the N-terminus, the 269-residue chain is tRNA-cytidine(32) 2-sulfurtransferase (269 aa).

Positions 53 to 58 match the PP-loop motif motif; the sequence is SGGKDS. [4Fe-4S] cluster contacts are provided by C128, C131, and C218.

The protein belongs to the TtcA family. Homodimer. Mg(2+) is required as a cofactor. It depends on [4Fe-4S] cluster as a cofactor.

It is found in the cytoplasm. The enzyme catalyses cytidine(32) in tRNA + S-sulfanyl-L-cysteinyl-[cysteine desulfurase] + AH2 + ATP = 2-thiocytidine(32) in tRNA + L-cysteinyl-[cysteine desulfurase] + A + AMP + diphosphate + H(+). It functions in the pathway tRNA modification. Functionally, catalyzes the ATP-dependent 2-thiolation of cytidine in position 32 of tRNA, to form 2-thiocytidine (s(2)C32). The sulfur atoms are provided by the cysteine/cysteine desulfurase (IscS) system. The chain is tRNA-cytidine(32) 2-sulfurtransferase from Pelobacter propionicus (strain DSM 2379 / NBRC 103807 / OttBd1).